The following is a 1682-amino-acid chain: MKIIFFLCSFLFFIINTQCVTHESYQELVKKLEALEDAVLTGYSLFQKEKMVLKDGANTQVVAKPADAVSTQSAKNPPGATVPSGTASTKGAIRSPGAANPSDDSSDSDAKSYADLKHRVQNYLFTIKELKYPELFDLTNHMLTLCDNIHGFKYLIDGYEEINELLYKLNFYFDLLRAKLNDVCANDYCQIPFNLKIRANELDVLKKLVFGYRKPLDFIKDNVGKMEDYIKKNKTTIANINELIEGSKKTIDQNKNADNEEGKKKLYQAQYDLFIYNKQLQEAHNLISVLEKRIDTLKKNENIKKLLEDIDKIKIDAEKPTTGVNQILSLRLEKESRHEEKIKEIAKTIKFNIDRLFTDPLELEYYLREKNKKVDVTPKSQDPTKSVQIPKVPYPNGIVYPLPLTDIHNSLAADNDKNSYGDLMNPHTKEKINEKIITDNKERKIFINNIKKQIDLEEKNINHTKEQNKKLLEDYEKSKKDYEELLEKFYEMKFNNNFNKDVVDKIFSARYTYNVEKQRYNNKFSSSNNSVYNVQKLKKALSYLEDYSLRKGISEKDFNHYYTLKTGLEADIKKLTEEIKSSENKILEKNFKGLTHSANASLEVSDIVKLQVQKVLLIKKIEDLRKIELFLKNAQLKDSIHVPNIYKPQNKPEPYYLIVLKKEVDKLKEFIPKVKDMLKKEQAVLSSITQPLVAASETTEDGGHSTHTLSQSGETEVTEETEETVGHTTTVTITLPPKEVKVVENSIEHKSNDNSQALTKTVYLKKLDEFLTKSYICHKYILVSNSSMDQKLLEVYNLTPEENELKSCDRLDLLFNIQNNIPAMYSLYDSMNNDLQHLFFELYQKEMIYYLHKLKEENHIKKLLEEPKQITGTSSTSSPGNTTVNTAQSATHSNSQNQQSNASSTNTQNGVAVSSGPAVVEESHDPLTVLSISNDLKGIVSLLNLGNKTKVPNPLTISTTEMEKFYENILKIMIPIFNDDIKQFVKSNSKVITGLTETQKNALNDEIKKLKDTLQLSFDLYNKYKLKLDRLFNKKKELGQDKMQIKKLTLLKEQLESKLNSLNNPHNVLQNFSVFFNKKKEAEIAETENTLENTKILLKHYKGLVKYYNGESSPLKTLSEVSIQTEDNYANLEKFRVLSKIDGKLNDNLHLGKKKLSFLSSGLHHLITELKEVIKNKNYTGNSPSENNKKVNEALKSYENFLPEAKVTTVVTPPQPDVTPSPLSVRVSGSSGSTKEETQIPTSGSLLTELQQVVQLQNYDEEDDSLVVLPIFGESEDNDEYLDQVVTGEAISVTMDNILSGFENEYDVIYLKPLAGVYRSLKKQIEKNIFTFNLNLNDILNSRLKKRKYFLDVLESDLMQFKHISSNEYIIEDSFKLLNSEQKNTLLKSYKYIKESVENDIKFAQEGISYYEKVLAKYKDDLESIKKVIKEEKEFPSSPPTTPPSPAKTDEQKKESKFLPFLTNIETLYNNLVNKIDDYLINLKAKINDCNVEKDEAHVKITKLSDLKAIDDKIDLFKNPYDFEAIKKLINDDTKKDMLGKLLSTGLVQNFPNTIISKLIEGKFQDMLNISQHQCVKKQCPQNSGCFRHLDEREECKCLLNYKQEGDKCVENPNPTCNENNGGCDADAKCTEEDSGSNGKKITCECTKPDSYPLFDGIFCSSSNFLGISFLLILMLILYSFI.

Residues Met-1–Cys-19 form the signal peptide. Residues Ala-68 to Ala-110 form a disordered region. N-linked (GlcNAc...) asparagine glycans are attached at residues Asn-233, Asn-462, Asn-528, and Asn-599. The segment at Ser-696 to Thr-729 is disordered. Asn-785, Asn-881, Asn-901, Asn-947, Asn-1071, and Asn-1178 each carry an N-linked (GlcNAc...) asparagine glycan. The disordered stretch occupies residues Ile-870 to Ala-918. Residues Thr-871–Asn-909 are compositionally biased toward low complexity. 2 disordered regions span residues Thr-1212–Pro-1241 and Lys-1433–Lys-1453. The segment covering Val-1227–Pro-1241 has biased composition (polar residues). A compositionally biased stretch (pro residues) spans Ser-1437–Pro-1446. N-linked (GlcNAc...) asparagine glycosylation occurs at Asn-1569. 2 consecutive EGF-like domains span residues His-1573–Pro-1613 and Asn-1614–Ser-1661. Cystine bridges form between Cys-1575-Cys-1586, Cys-1580-Cys-1596, Cys-1598-Cys-1609, Cys-1617-Cys-1630, Cys-1624-Cys-1644, and Cys-1646-Cys-1660. A lipid anchor (GPI-anchor amidated serine) is attached at Ser-1661. Residues Ser-1662–Ile-1682 constitute a propeptide, removed in mature form.

Forms a complex composed of subunits p83, p30, p38, and p42 which remain non-covalently associated; the complex is formed at the merozoite surface prior to egress from host erythrocytes. Forms a complex composed of processed MSP1 subunits, MSP6 subunit p36 and MSP7; the complex is formed at the merozoite surface prior to egress from host erythrocytes. Within the complex, interacts (via subunit p38) with MSP6 subunit p36 and (via subunits p83, p30 and p38) with MSP7 (via subunit p22). Forms a complex composed of MSP1, MSP6, DBLMSP1 and DBLMSP2. Within the complex, interacts (via subunit p38) with DBLMSP1 and DBLMSP2. Forms a complex composed of MSP1, and rhoptry proteins RhopH3, RAP1 and CLAG9/RhopH3. Within the complex, interacts (via subunits p42 and p19) with RhopH3 (via C-terminus). Forms a complex composed of MSP1, MSP6, MSP7, MSP9 and MSP3; within the complex, MSP6 and MSP9 mediate the binding to the host erythrocyte. Interacts (via subunits p19 and p42) with MSP9; the interaction is direct; MSP1 subunits p19 or p42, and MSP9 form a co-ligand complex that interacts with host SLC4A1/Band 3 protein. May interact with PFD6. Interacts with host spectrin. As to quaternary structure, interacts with host glycophorin GYPA in a sialic acid-independent manner. In terms of assembly, interacts with host proinflammatory cytokine S100P; the interaction blocks S100P inflammatory and chemotactic activities. Interacts with host SLC4A1/Band 3 (via 5ABC region) on the host erythrocyte surface in a sialic acid-independent manner. In terms of processing, the p190 precursor is cleaved by SUB1 prior to merozoite egress into 4 subunits p83, p30, p38, and p42 which remain non-covalently associated. SUB1-mediated proteolytic cleavage occurs in an orderly manner; the first cleavage occurs at the p30/p38 site, followed by cleavage at the p83/p30 site, the last cleavage occurs at the p38/p42 site. The order of cleavage is essential for parasite viability. SUB1-mediated processing is essential for merozoite egress. In a second processing step during erythrocyte invasion, p42 is cleaved by SUB2 into p33 and p19; the latter remains attached to the merozoite surface via its GPI-anchor and is endocytosed during the subsequent ring stage.

It localises to the cell membrane. The protein resides in the secreted. Its subcellular location is the vacuole membrane. Its function is as follows. During the asexual blood stage, involved in merozoite egress from host erythrocytes possibly via its interaction with the host cytoskeleton protein spectrin resulting in the destabilization of the host cytoskeleton and thus leading to erythrocyte cell membrane rupture. Involved in the binding to host erythrocytes and is required for host erythrocyte invasion. Functionally, by binding to host proinflammatory cytokine S100P may interfere with host immune responses. Involved in merozoite invasion of host erythrocytes. May play a role in the biogenesis and/or function of the food vacuole during the intraerythrocytic development. In Plasmodium falciparum (isolate ro-33 / Ghana), this protein is Merozoite surface protein 1.